The following is a 35-amino-acid chain: Z-limacoditoxin(1)-Dv1 (35 aa).

Residues 1–22 (MKKTFLPIFLVILLASYALANP) form the signal peptide. A Pyrrolidone carboxylic acid modification is found at glutamine 23. Proline 32 carries the proline amide modification.

The protein belongs to the limacoditoxin-1 (ACP-like) family. Expressed by the venom secretory cell of the spine. The spine is a cuticular structure containing a single large nucleated venom-secreting cell at its base. It is an independent unit capable of producing, storing and injecting venom. On the back of D.vulnerans caterpillars, spines are grouped together by 50 to 100 to form scoli, of which there are eight in D.vulnerans.

The protein localises to the secreted. In terms of biological role, potently activates insect G protein-coupled receptor. It activates the ACP receptor (ACPR) from the mosquito A.aegypti (EC(50)=0.55 nM) with a potency comparable to that of the endogenous ligand. Has no activity on receptors of the closely related neuropeptides adipokinetic hormone and corazonin. In vivo, does not reveal any observable effects when injected into crickets (A.domesticus). Does not induce increase in intracellular calcium in mouse DRG neurons, suggesting that it does not induce pain. This chain is Z-limacoditoxin(1)-Dv1, found in Doratifera vulnerans (Mottled cup moth).